The primary structure comprises 131 residues: Small ribosomal subunit protein uS8 (131 aa).

This sequence belongs to the universal ribosomal protein uS8 family. In terms of assembly, part of the 30S ribosomal subunit. Contacts proteins S5 and S12.

One of the primary rRNA binding proteins, it binds directly to 16S rRNA central domain where it helps coordinate assembly of the platform of the 30S subunit. This chain is Small ribosomal subunit protein uS8, found in Dehalococcoides mccartyi (strain CBDB1).